We begin with the raw amino-acid sequence, 42 residues long: uncharacterized protein (42 aa).

The disordered stretch occupies residues 1–42; the sequence is MTTGKPQSFEKMRTPFPGRSKAKGPQSDIIPSAPPNTPVTEH. The span at 32–42 shows a compositional bias: pro residues; that stretch reads SAPPNTPVTEH.

This is an uncharacterized protein from Schizosaccharomyces pombe (strain 972 / ATCC 24843) (Fission yeast).